The primary structure comprises 209 residues: Guanylate kinase (209 aa).

The region spanning 9–188 (GIMLVMSSPS…SVQQIKSIFI (180 aa)) is the Guanylate kinase-like domain. 16–23 (SPSGGGKT) provides a ligand contact to ATP.

This sequence belongs to the guanylate kinase family.

Its subcellular location is the cytoplasm. The enzyme catalyses GMP + ATP = GDP + ADP. Its function is as follows. Essential for recycling GMP and indirectly, cGMP. The sequence is that of Guanylate kinase from Ehrlichia ruminantium (strain Gardel).